The sequence spans 638 residues: LIM domain kinase 2 (638 aa).

2 consecutive LIM zinc-binding domains span residues 12–63 (CQGC…CHKD) and 72–124 (CHGC…CGKC). The region spanning 152 to 239 (HISMPATTEG…TLQLLIEHDP (88 aa)) is the PDZ domain. Positions 280-304 (RRRSLRRSNSISKSPGPSSPKEPLL) are disordered. The segment covering 286 to 304 (RSNSISKSPGPSSPKEPLL) has biased composition (low complexity). S293 and S298 each carry phosphoserine. The Protein kinase domain maps to 331–608 (LIHGEVLGKG…DFFEALSLYL (278 aa)). ATP contacts are provided by residues 337 to 345 (LGKGFFGQA) and N360. D451 is a catalytic residue. T505 is modified (phosphothreonine; by ROCK1 and CDC42BP).

It belongs to the protein kinase superfamily. TKL Ser/Thr protein kinase family. In terms of assembly, binds ROCK1 and MARF1. Interacts with NISCH. In terms of processing, phosphorylated on serine and/or threonine residues by ROCK1.

It is found in the cytoplasm. The protein resides in the cytoskeleton. The protein localises to the spindle. It localises to the microtubule organizing center. Its subcellular location is the centrosome. It catalyses the reaction L-seryl-[protein] + ATP = O-phospho-L-seryl-[protein] + ADP + H(+). It carries out the reaction L-threonyl-[protein] + ATP = O-phospho-L-threonyl-[protein] + ADP + H(+). Functionally, serine/threonine-protein kinase that plays an essential role in the regulation of actin filament dynamics. Acts downstream of several Rho family GTPase signal transduction pathways. Involved in astral microtubule organization and mitotic spindle orientation during early stages of mitosis by mediating phosphorylation of TPPP. Displays serine/threonine-specific phosphorylation of myelin basic protein and histone (MBP) in vitro. Suppresses ciliogenesis via multiple pathways; phosphorylation of CFL1, suppression of directional trafficking of ciliary vesicles to the ciliary base, and by facilitating YAP1 nuclear localization where it acts as a transcriptional corepressor of the TEAD4 target genes AURKA and PLK1. In Bos taurus (Bovine), this protein is LIM domain kinase 2 (LIMK2).